The chain runs to 103 residues: UPF0145 protein BCE33L0904 (103 aa).

Belongs to the UPF0145 family.

This chain is UPF0145 protein BCE33L0904, found in Bacillus cereus (strain ZK / E33L).